The sequence spans 111 residues: Disintegrin Eo1 subunit 1 (111 aa).

A signal peptide spans 1 to 20 (MIQVLLVIICLAVFPYQGSS). Positions 21–46 (IILESGNVNDFELVYPKKVTVLPTGA) are excised as a propeptide. The 86-residue stretch at 26 to 111 (GNVNDFELVY…SDCPRNPWKD (86 aa)) folds into the Disintegrin domain. 4 disulfides stabilise this stretch: cysteine 53/cysteine 76, cysteine 67/cysteine 73, cysteine 72/cysteine 97, and cysteine 85/cysteine 104. Positions 89 to 91 (WGD) match the Cell attachment site; atypical (WGD) motif. Positions 110–111 (KD) are excised as a propeptide.

This sequence belongs to the disintegrin family. Dimeric disintegrin subfamily. In terms of assembly, heterodimer; disulfide-linked. As to expression, expressed by the venom gland.

It is found in the secreted. Its function is as follows. Poor inhibitor of platelet aggregation. The disintegrin inhibits the adhesion of cells expressing the RGD-dependent integrin alpha-5/beta-1 (ITGA5/ITGB1) to immobilized fibronectin. Inhibition on alpha-IIb/beta-3 (ITGA2B/ITGB3) is low. This Echis ocellatus (Ocellated saw-scaled viper) protein is Disintegrin Eo1 subunit 1.